Reading from the N-terminus, the 341-residue chain is UDP-N-acetylenolpyruvoylglucosamine reductase (341 aa).

The region spanning 15-185 is the FAD-binding PCMH-type domain; the sequence is VTQSCLSLIE…TAVGLRLPKT (171 aa). Arg-161 is a catalytic residue. Ser-231 (proton donor) is an active-site residue. Glu-327 is a catalytic residue.

The protein belongs to the MurB family. FAD is required as a cofactor.

Its subcellular location is the cytoplasm. It carries out the reaction UDP-N-acetyl-alpha-D-muramate + NADP(+) = UDP-N-acetyl-3-O-(1-carboxyvinyl)-alpha-D-glucosamine + NADPH + H(+). It participates in cell wall biogenesis; peptidoglycan biosynthesis. Functionally, cell wall formation. The chain is UDP-N-acetylenolpyruvoylglucosamine reductase from Shewanella oneidensis (strain ATCC 700550 / JCM 31522 / CIP 106686 / LMG 19005 / NCIMB 14063 / MR-1).